A 133-amino-acid polypeptide reads, in one-letter code: Cytochrome c-type biogenesis protein CcmE (133 aa).

Topologically, residues 1 to 7 are cytoplasmic; that stretch reads MKRKHKR. A helical; Signal-anchor for type II membrane protein membrane pass occupies residues 8 to 28; it reads LLFIIVTFIIFGSSVVIVLNK. The Periplasmic portion of the chain corresponds to 29–133; that stretch reads LRSNISFFFT…NYKPGKYRAK (105 aa). Positions 121 and 125 each coordinate heme.

It belongs to the CcmE/CycJ family.

It is found in the cell inner membrane. Heme chaperone required for the biogenesis of c-type cytochromes. Transiently binds heme delivered by CcmC and transfers the heme to apo-cytochromes in a process facilitated by CcmF and CcmH. The polypeptide is Cytochrome c-type biogenesis protein CcmE (Ehrlichia canis (strain Jake)).